A 191-amino-acid chain; its full sequence is Protein HP-20 homolog (191 aa).

Residues 1–16 form the signal peptide; sequence MADLRILVSIILMTNA. In terms of domain architecture, Collagen-like spans 22–58; sequence GCTGPPGPPGHPGPPGIRGPPGIRGIPGLPGPPGTPG. The tract at residues 22-61 is disordered; that stretch reads GCTGPPGPPGHPGPPGIRGPPGIRGIPGLPGPPGTPGPSV. The span at 26-39 shows a compositional bias: pro residues; the sequence is PPGPPGHPGPPGIR. The C1q domain maps to 64 to 191; it reads PCHRQSAFTV…VTIYFSGFLT (128 aa).

The protein resides in the secreted. The sequence is that of Protein HP-20 homolog from Bos taurus (Bovine).